A 285-amino-acid polypeptide reads, in one-letter code: Golgi phosphoprotein 3-like (285 aa).

The segment at 1 to 43 is disordered; the sequence is MTTLTHRTRRTEVSKSCEKKIESEEDTNQERSPDNEDPGDSKD. Positions 10-43 are enriched in basic and acidic residues; the sequence is RTEVSKSCEKKIESEEDTNQERSPDNEDPGDSKD. A 1,2-diacyl-sn-glycero-3-phospho-(1D-myo-inositol 4-phosphate) contacts are provided by W67 and R76. S112 bears the Phosphoserine mark. R157 and R160 together coordinate a 1,2-diacyl-sn-glycero-3-phospho-(1D-myo-inositol 4-phosphate). A beta-hairpin required for oligomerization region spans residues 176-187; sequence EKQNFLLFDMTT.

It belongs to the GOLPH3/VPS74 family. As to quaternary structure, homooligomer. Does not interact MYO18; differs from GOLPH3 by its inability to interact with MYO18. May interact with ARF1.

Its subcellular location is the golgi apparatus. It localises to the golgi stack membrane. The protein localises to the trans-Golgi network membrane. Phosphatidylinositol-4-phosphate-binding protein that may antagonize the action of GOLPH3 which is required for the process of vesicle budding at the Golgi and anterograde transport to the plasma membrane. The chain is Golgi phosphoprotein 3-like (Golph3l) from Rattus norvegicus (Rat).